Here is a 512-residue protein sequence, read N- to C-terminus: Maturase K (512 aa).

The protein belongs to the intron maturase 2 family. MatK subfamily.

The protein resides in the plastid. Its subcellular location is the chloroplast. Functionally, usually encoded in the trnK tRNA gene intron. Probably assists in splicing its own and other chloroplast group II introns. The polypeptide is Maturase K (Lilium longiflorum (Trumpet lily)).